A 234-amino-acid polypeptide reads, in one-letter code: AGEDHGRGPYVQADLAYAYEHITHDYPEPTGTKKDKISTVSDYFRNIRTHSIHPRVSVGYDFGGWRIAADYARYRKWNDNKYSVDIKELENKNQNKRDLKTENQENGTFHAVSSLGLSAVYDFKLNDKFKPYIGARVAYGHVRHSIDSTKKTTKFLTSSYGGLNPTVYTEENTQNAHHQSNSIRRVGLGVIAGVGFDITPKLTLDAGYRYHNWGRLENTRFKTHEASLGVRYRF.

Residue A1 is a signal peptide.

It belongs to the opacity porin family.

Its subcellular location is the cell outer membrane. In terms of biological role, implicated in a number of adherence functions. OPA proteins are implicated in pathogenesis and are subject to phase variation. The protein is Opacity protein V28 of Neisseria gonorrhoeae.